The sequence spans 278 residues: Probable velvet family sexual development regulator SCHCODRAFT_28806 (278 aa).

One can recognise a Velvet domain in the interval 51-255 (GRTIRASLDE…ARVGVRLSVR (205 aa)). Residues 257–278 (TGKKATTKRRKRSDSFDEDDSS) are disordered.

The protein belongs to the velvet family.

It is found in the nucleus. Functionally, velvet-domain-containing protein that probably acts as a positive regulator of sexual development. This Schizophyllum commune (strain H4-8 / FGSC 9210) (Split gill fungus) protein is Probable velvet family sexual development regulator SCHCODRAFT_28806.